The following is a 242-amino-acid chain: Flavin prenyltransferase PAD1, mitochondrial (242 aa).

The transit peptide at M1–V58 directs the protein to the mitochondrion. FMN-binding positions include G63–T65, S89, S140–S143, and R175. Positions 205 and 221 each coordinate dimethylallyl phosphate.

Belongs to the UbiX/PAD1 family. Oligomer.

It is found in the mitochondrion. It carries out the reaction dimethylallyl phosphate + FMNH2 = prenylated FMNH2 + phosphate. In terms of biological role, flavin prenyltransferase that catalyzes the synthesis of the prenylated FMN cofactor (prenyl-FMN) for the ferulic acid decarboxylase FDC1/ubiD. The prenyltransferase is metal-independent and links a dimethylallyl moiety from dimethylallyl monophosphate (DMAP) to the flavin N5 and C6 atoms of FMN. Involved in the decarboxylation of phenylacrylic acids like ferulic acid, p-coumaric acid or cinnamic acid, producing the corresponding vinyl derivatives which play the role of aroma metabolites. Also involved in the degradation of the food preservative sorbic acid (2,4-hexadienoic acid) to a volatile hydrocarbon, 1,3-pentadiene. Not essential for ubiquinone synthesis. Can rescue Q biosynthesis in E.coli strains lacking UbiX. Has mRNA binding activity. The polypeptide is Flavin prenyltransferase PAD1, mitochondrial (Saccharomyces cerevisiae (strain ATCC 204508 / S288c) (Baker's yeast)).